A 152-amino-acid chain; its full sequence is Acidic phospholipase A2 1 (152 aa).

The first 19 residues, 1–19 (MNPAYFLVLAAVCVSLLGA), serve as a signal peptide directing secretion. Positions 20 to 27 (ANIPPQPL) are excised as a propeptide. Disulfide bonds link C38/C104, C54/C151, C56/C72, C71/C132, C78/C125, C88/C118, and C111/C123. Ca(2+)-binding residues include Y55, G57, and G59. Residue H75 is part of the active site. D76 is a binding site for Ca(2+). D126 is an active-site residue.

It belongs to the phospholipase A2 family. Group I subfamily. D49 sub-subfamily. It depends on Ca(2+) as a cofactor. In terms of tissue distribution, expressed by the venom gland.

Its subcellular location is the secreted. The catalysed reaction is a 1,2-diacyl-sn-glycero-3-phosphocholine + H2O = a 1-acyl-sn-glycero-3-phosphocholine + a fatty acid + H(+). In terms of biological role, PLA2 catalyzes the calcium-dependent hydrolysis of the 2-acyl groups in 3-sn-phosphoglycerides. The sequence is that of Acidic phospholipase A2 1 from Bungarus candidus (Malayan krait).